A 201-amino-acid chain; its full sequence is Recombination protein RecR (201 aa).

The C4-type zinc-finger motif lies at 60 to 75 (CHACGNVDTSDPCTIC). One can recognise a Toprim domain in the interval 83–178 (TTLVVVEDVS…TITRLAHGVP (96 aa)).

It belongs to the RecR family.

May play a role in DNA repair. It seems to be involved in an RecBC-independent recombinational process of DNA repair. It may act with RecF and RecO. This Methylorubrum populi (strain ATCC BAA-705 / NCIMB 13946 / BJ001) (Methylobacterium populi) protein is Recombination protein RecR.